A 1562-amino-acid chain; its full sequence is E3 ubiquitin-protein ligase listerin (1562 aa).

HEAT repeat units lie at residues 41–78, 127–164, 175–217, 262–301, 304–348, 495–532, 555–592, 813–850, 908–945, 997–1037, 1047–1085, 1188–1226, 1263–1298, and 1299–1339; these read SLYS…DFNQ, KFLK…KDPA, EQLL…SAVL, ETVL…ITSK, LKVC…VSRT, SAIS…FLDS, STYQ…VALS, IRYA…DYNC, YYSR…KTVR, FKSL…WLDS, TVRL…DSLS, INQS…SDVD, NSFI…KEAG, and LINR…NFSP. The segment at 1508 to 1555 adopts an RING-type zinc-finger fold; it reads CAICYSILHAVDRKLPSKTCPTCKNKFHGACLYKWFRSSGNNTCPLCR.

Belongs to the LTN1 family. Component of the ribosome quality control complex (RQC), composed of the E3 ubiquitin ligase RKR1/LTN1, RQC1 and RQC2, as well as CDC48 and its ubiquitin-binding cofactors associated with the 60S ribosomal subunits.

The protein resides in the nucleus. It localises to the cytoplasm. It is found in the cytosol. It catalyses the reaction S-ubiquitinyl-[E2 ubiquitin-conjugating enzyme]-L-cysteine + [acceptor protein]-L-lysine = [E2 ubiquitin-conjugating enzyme]-L-cysteine + N(6)-ubiquitinyl-[acceptor protein]-L-lysine.. The protein operates within protein modification; protein ubiquitination. Its function is as follows. E3 ubiquitin-protein ligase component of the ribosome quality control complex (RQC), a ribosome-associated complex that mediates ubiquitination and extraction of incompletely synthesized nascent chains for proteasomal degradation. Mediates ubiquitination of proteins derived from mRNAs lacking stop codons (non-stop proteins) and other translation arrest products induced by poly-lysine sequences and tandem rare codons. Ubiquitination leads to CDC48 recruitment for extraction and degradation of the incomplete translation product. May indirectly play a role in chromatin function and transcription. This Saccharomyces cerevisiae (strain ATCC 204508 / S288c) (Baker's yeast) protein is E3 ubiquitin-protein ligase listerin.